A 227-amino-acid polypeptide reads, in one-letter code: Enolase-phosphatase E1 (227 aa).

Mg(2+)-binding residues include Asp-11 and Glu-13. Substrate contacts are provided by residues 118-119 and Lys-161; that span reads SS. Residue Asp-186 participates in Mg(2+) binding.

This sequence belongs to the HAD-like hydrolase superfamily. MasA/MtnC family. As to quaternary structure, monomer. Mg(2+) is required as a cofactor.

The protein resides in the cytoplasm. It localises to the nucleus. The catalysed reaction is 5-methylsulfanyl-2,3-dioxopentyl phosphate + H2O = 1,2-dihydroxy-5-(methylsulfanyl)pent-1-en-3-one + phosphate. It participates in amino-acid biosynthesis; L-methionine biosynthesis via salvage pathway; L-methionine from S-methyl-5-thio-alpha-D-ribose 1-phosphate: step 3/6. The protein operates within amino-acid biosynthesis; L-methionine biosynthesis via salvage pathway; L-methionine from S-methyl-5-thio-alpha-D-ribose 1-phosphate: step 4/6. Functionally, bifunctional enzyme that catalyzes the enolization of 2,3-diketo-5-methylthiopentyl-1-phosphate (DK-MTP-1-P) into the intermediate 2-hydroxy-3-keto-5-methylthiopentenyl-1-phosphate (HK-MTPenyl-1-P), which is then dephosphorylated to form the acireductone 1,2-dihydroxy-3-keto-5-methylthiopentene (DHK-MTPene). In Saccharomyces cerevisiae (strain ATCC 204508 / S288c) (Baker's yeast), this protein is Enolase-phosphatase E1.